The chain runs to 81 residues: Large ribosomal subunit protein uL23 (81 aa).

The protein belongs to the universal ribosomal protein uL23 family. Part of the 50S ribosomal subunit. Contacts protein L29.

In terms of biological role, binds to 23S rRNA. One of the proteins that surrounds the polypeptide exit tunnel on the outside of the ribosome. The chain is Large ribosomal subunit protein uL23 from Pyrobaculum aerophilum (strain ATCC 51768 / DSM 7523 / JCM 9630 / CIP 104966 / NBRC 100827 / IM2).